Here is a 290-residue protein sequence, read N- to C-terminus: Phosphatidylglycerol--prolipoprotein diacylglyceryl transferase (290 aa).

The next 7 membrane-spanning stretches (helical) occupy residues 21–41 (VSLHWYGLMYLVGFVFAMWLA), 60–80 (LLYAGFLGVFIGGRVGYVLFY), 96–116 (WDGGMSFHGGLIGVICVMLWF), 124–144 (FFQVADFIAPLIPFGLGAGRL), 199–219 (SQLYEMILEGVVLFIILNVFI), 226–246 (GSVSGLFLIGYGTFRIIVECF), and 260–280 (ISMGQILSVPMILAGIIMMIW). Residue Arg-143 coordinates a 1,2-diacyl-sn-glycero-3-phospho-(1'-sn-glycerol).

It belongs to the Lgt family.

The protein localises to the cell inner membrane. The catalysed reaction is L-cysteinyl-[prolipoprotein] + a 1,2-diacyl-sn-glycero-3-phospho-(1'-sn-glycerol) = an S-1,2-diacyl-sn-glyceryl-L-cysteinyl-[prolipoprotein] + sn-glycerol 1-phosphate + H(+). The protein operates within protein modification; lipoprotein biosynthesis (diacylglyceryl transfer). In terms of biological role, catalyzes the transfer of the diacylglyceryl group from phosphatidylglycerol to the sulfhydryl group of the N-terminal cysteine of a prolipoprotein, the first step in the formation of mature lipoproteins. In Yersinia pseudotuberculosis serotype O:1b (strain IP 31758), this protein is Phosphatidylglycerol--prolipoprotein diacylglyceryl transferase.